Consider the following 929-residue polypeptide: MGSNSGRTTKLPLVPLPKGSVLLPGITLRIPVSNRPDLANLLSTIVDRSAVAKRDGTAITFGCVPLSSPYLSKDGQRLIDDGSLDEDRREEFDMIDAGQSRKEDLFRHGTIGKVIGIQRRAYSEPALVVQGVQRFTIRRVLKERPFFEAEAVVHDEKVSGDAETVELFQQLRQLSRELLTLLRLSSLLPSPGSRLSPLIARKFELFITKSDVSHASRLADFMADVADSGFEEKLRILASLDVKIRLERVVEILTRQLQSIKSNVKVTTITTNSFPSSGFDINQIDPRDREILARKAMAGLSGLTPPGLSAGRNNDNDDKESNEVDELQQRLQEAQLSPEARKVADKELRRLRKMNPANAEYGVCRTYLENIADIPWTKMTEDQLGPETLKRARKQLDDDHYGLEKIKKRLLEYLAVLRLKQSTNRDVERQIESLSKELEASDGGDLEKEVPVLSETDRVAVETKLHMLKTRRMGDKSPILLLVGPPGVGKTSLARSVASSLGRKFHRISLGGVRDEAEIRGHRRTYVAAMPGLIVSGLKKVGVANPVFLLDEIDKVGGANFQGDPSAAMLEVLDPEQNHTFSDHYINIPIDLSKVLFIATANSLDTIPAPLLDRMETISLSGYTTVEKRHIAKRHLIPKQIRANGLSDGQVVLSDEVIDKIITSYTRESGVRNLERELGSVCRFKAVQFADAGDAGRLDAYNPVVSMDELEEILGIERFEEEIAEKHGRPGVVTGLVAYSTGGQGSILFIEVADMPGNGRVQLTGKLGDVLKESVEVALTWVKAHAFELGLTADPTEDIMKNRSLHVHCPSGAIPKDGPSAGLAHTMGLISLFTGKAVPPSVAMTGEVSLRGKVMPVGGIKEKLIGALRAGVKTVLLPHHNRKDVKDVPQEVSEGLEIVYVTHIWEAIRQVWPDAHWPGQHTHFIESRL.

Positions 11–257 (LPLVPLPKGS…RVVEILTRQL (247 aa)) constitute a Lon N-terminal domain. Residues 302 to 325 (GLTPPGLSAGRNNDNDDKESNEVD) form a disordered region. 484–491 (GPPGVGKT) contributes to the ATP binding site. In terms of domain architecture, Lon proteolytic spans 727–914 (HGRPGVVTGL…WEAIRQVWPD (188 aa)). Active-site residues include Ser-820 and Lys-863. Residues 927–929 (SRL) carry the Microbody targeting signal motif.

It belongs to the peptidase S16 family.

Its subcellular location is the peroxisome matrix. It carries out the reaction Hydrolysis of proteins in presence of ATP.. ATP-dependent serine protease that mediates the selective degradation of misfolded and unassembled polypeptides in the peroxisomal matrix. Necessary for type 2 peroxisome targeting signal (PTS2)-containing protein processing and facilitates peroxisome matrix protein import. The polypeptide is Lon protease homolog 2, peroxisomal (Aspergillus niger (strain ATCC MYA-4892 / CBS 513.88 / FGSC A1513)).